The sequence spans 158 residues: Ribosome-binding factor A (158 aa).

Residues 114–158 (AKDAEVRQVSTGAQYAGDADPYRKPEDEDEETDGSSEKNEGPASA) form a disordered region. Residues 148–158 (SSEKNEGPASA) are compositionally biased toward basic and acidic residues.

The protein belongs to the RbfA family. In terms of assembly, monomer. Binds 30S ribosomal subunits, but not 50S ribosomal subunits or 70S ribosomes.

The protein resides in the cytoplasm. In terms of biological role, one of several proteins that assist in the late maturation steps of the functional core of the 30S ribosomal subunit. Associates with free 30S ribosomal subunits (but not with 30S subunits that are part of 70S ribosomes or polysomes). Required for efficient processing of 16S rRNA. May interact with the 5'-terminal helix region of 16S rRNA. The protein is Ribosome-binding factor A of Streptomyces griseus subsp. griseus (strain JCM 4626 / CBS 651.72 / NBRC 13350 / KCC S-0626 / ISP 5235).